Here is a 301-residue protein sequence, read N- to C-terminus: Protein FdhE homolog (301 aa).

The protein belongs to the FdhE family.

The protein resides in the cytoplasm. Functionally, necessary for formate dehydrogenase activity. The chain is Protein FdhE homolog from Erwinia tasmaniensis (strain DSM 17950 / CFBP 7177 / CIP 109463 / NCPPB 4357 / Et1/99).